Reading from the N-terminus, the 277-residue chain is Energy-coupling factor transporter ATP-binding protein EcfA (277 aa).

The region spanning 4-238 (LETRDLTHIY…PELLTQTRLD (235 aa)) is the ABC transporter domain. Residue 37–44 (GPNGAGKS) participates in ATP binding.

It belongs to the ABC transporter superfamily. Energy-coupling factor EcfA family. Forms a stable energy-coupling factor (ECF) transporter complex composed of 2 membrane-embedded substrate-binding proteins (S component), 2 ATP-binding proteins (A component) and 2 transmembrane proteins (T component).

Its subcellular location is the cell membrane. In terms of biological role, ATP-binding (A) component of a common energy-coupling factor (ECF) ABC-transporter complex. Unlike classic ABC transporters this ECF transporter provides the energy necessary to transport a number of different substrates. This Methanoculleus marisnigri (strain ATCC 35101 / DSM 1498 / JR1) protein is Energy-coupling factor transporter ATP-binding protein EcfA.